An 87-amino-acid polypeptide reads, in one-letter code: U3-theraphotoxin-Hhn1b (87 aa).

An N-terminal signal peptide occupies residues 1–24 (MVNMKASMFLTFAGLVLLFVVCYA). The propeptide occupies 25-52 (SESEEKEFPREMLSSIFAVDNDFKQEER). Cystine bridges form between C54–C67 and C61–C72.

This sequence belongs to the neurotoxin 10 (Hwtx-1) family. 51 (Hntx-8) subfamily. Hntx-8 sub-subfamily. As to expression, expressed by the venom gland.

The protein localises to the secreted. Functionally, ion channel inhibitor. This chain is U3-theraphotoxin-Hhn1b, found in Cyriopagopus hainanus (Chinese bird spider).